The chain runs to 154 residues: 3-hydroxyacyl-[acyl-carrier-protein] dehydratase FabZ (154 aa).

H60 is a catalytic residue.

The protein belongs to the thioester dehydratase family. FabZ subfamily.

The protein localises to the cytoplasm. It carries out the reaction a (3R)-hydroxyacyl-[ACP] = a (2E)-enoyl-[ACP] + H2O. Involved in unsaturated fatty acids biosynthesis. Catalyzes the dehydration of short chain beta-hydroxyacyl-ACPs and long chain saturated and unsaturated beta-hydroxyacyl-ACPs. This Haemophilus ducreyi (strain 35000HP / ATCC 700724) protein is 3-hydroxyacyl-[acyl-carrier-protein] dehydratase FabZ.